We begin with the raw amino-acid sequence, 110 residues long: Phosphoribosyl-ATP pyrophosphatase (110 aa).

This sequence belongs to the PRA-PH family.

The protein localises to the cytoplasm. The catalysed reaction is 1-(5-phospho-beta-D-ribosyl)-ATP + H2O = 1-(5-phospho-beta-D-ribosyl)-5'-AMP + diphosphate + H(+). It participates in amino-acid biosynthesis; L-histidine biosynthesis; L-histidine from 5-phospho-alpha-D-ribose 1-diphosphate: step 2/9. In Azotobacter chroococcum mcd 1, this protein is Phosphoribosyl-ATP pyrophosphatase (hisE).